The following is a 113-amino-acid chain: Large ribosomal subunit protein bL17 (113 aa).

The protein belongs to the bacterial ribosomal protein bL17 family. Part of the 50S ribosomal subunit. Contacts protein L32.

This is Large ribosomal subunit protein bL17 from Alkaliphilus metalliredigens (strain QYMF).